A 266-amino-acid chain; its full sequence is GTP-binding protein Rhes (266 aa).

A GTP-binding site is contributed by 26–33; the sequence is GASRVGKS. The Effector region motif lies at 48-56; it reads YTPTIEDFH. GTP is bound by residues 73–77 and 140–143; these read DTSGN and NKND. Residues 189-235 are interaction with GNB1, GNB2 and GNB3; that stretch reads MAKLPHEMSPALHRKISVQYGDAFHPRPFCMRRVKEMDAYGMVSPFA. A Cysteine methyl ester modification is found at Cys-263. Cys-263 carries the S-farnesyl cysteine lipid modification. Positions 264–266 are cleaved as a propeptide — removed in mature form; it reads TIQ.

This sequence belongs to the small GTPase superfamily. RasD family. In terms of assembly, monomer (Potential). Interacts with PIK3CA and UBE2I. Interacts with GNB1, GNB2 and GNB3. Interacts with HTT; interacts with mutant HTT (mHTT) with a much higher affinity than wild type HTT. In terms of processing, farnesylated. Farnesylation is required for membrane targeting. In terms of tissue distribution, pancreatic endocrine cells (islets of Langerhans).

The protein resides in the cell membrane. Functionally, GTPase signaling protein that binds to and hydrolyzes GTP. Regulates signaling pathways involving G-proteins-coupled receptor and heterotrimeric proteins such as GNB1, GNB2 and GNB3. May be involved in selected striatal competencies, mainly locomotor activity and motor coordination. This chain is GTP-binding protein Rhes (RASD2), found in Homo sapiens (Human).